Reading from the N-terminus, the 61-residue chain is UPF0434 protein Bpet2671 (61 aa).

The protein belongs to the UPF0434 family.

This Bordetella petrii (strain ATCC BAA-461 / DSM 12804 / CCUG 43448) protein is UPF0434 protein Bpet2671.